The following is a 444-amino-acid chain: Jacalin-related lectin 42 (444 aa).

Position 2 is an N-acetylalanine (A2). Jacalin-type lectin domains lie at 2–143 (ALMV…YYIR), 146–289 (ATKS…YYAP), and 297–441 (TEKL…HVIP).

The protein belongs to the jacalin lectin family.

The chain is Jacalin-related lectin 42 (JAL42) from Arabidopsis thaliana (Mouse-ear cress).